Consider the following 78-residue polypeptide: UPF0270 protein YPTB3725 (78 aa).

The protein belongs to the UPF0270 family.

In Yersinia pseudotuberculosis serotype I (strain IP32953), this protein is UPF0270 protein YPTB3725.